Here is a 337-residue protein sequence, read N- to C-terminus: NADH-quinone oxidoreductase subunit H (337 aa).

Transmembrane regions (helical) follow at residues 9–29 (FAKIWAVLIPLFLAVAYFTYV), 77–97 (FLIAPAMAIMPALAAWAVIPF), 110–130 (LLYILAMTSLGVYGLIIAGWA), 154–174 (MGFALVGVLIAAGTMNLSGIV), 181–201 (FWEWFWLPLLPLFLIYWISGV), 229–249 (MAFAVFFLAEYANMLLISFLA), 274–294 (VPGIVWLFAKAAFFAFCYLWF), and 313–333 (VLIPGTVVWLVVLTGLVYGGV).

The protein belongs to the complex I subunit 1 family. As to quaternary structure, NDH-1 is composed of 14 different subunits. Subunits NuoA, H, J, K, L, M, N constitute the membrane sector of the complex.

It localises to the cell inner membrane. It catalyses the reaction a quinone + NADH + 5 H(+)(in) = a quinol + NAD(+) + 4 H(+)(out). In terms of biological role, NDH-1 shuttles electrons from NADH, via FMN and iron-sulfur (Fe-S) centers, to quinones in the respiratory chain. The immediate electron acceptor for the enzyme in this species is believed to be ubiquinone. Couples the redox reaction to proton translocation (for every two electrons transferred, four hydrogen ions are translocated across the cytoplasmic membrane), and thus conserves the redox energy in a proton gradient. This subunit may bind ubiquinone. The sequence is that of NADH-quinone oxidoreductase subunit H from Halorhodospira halophila (strain DSM 244 / SL1) (Ectothiorhodospira halophila (strain DSM 244 / SL1)).